We begin with the raw amino-acid sequence, 361 residues long: Protein SSUH2 homolog (361 aa).

The protein resides in the cytoplasm. It localises to the nucleus. In terms of biological role, plays a role in odontogenesis. The sequence is that of Protein SSUH2 homolog from Danio rerio (Zebrafish).